A 608-amino-acid polypeptide reads, in one-letter code: ATP-citrate synthase beta chain protein 1 (608 aa).

ATP-binding positions include 214 to 234 and 265 to 291; these read ILRFNNIPQVKMMVVLGELGG and FKSEVQFGHAGAKSGGELESAQAKNQA. Glu231 contributes to the Mg(2+) binding site. Residue His273 is the Tele-phosphohistidine intermediate of the active site. 292 to 302 contacts CoA; it reads LKDAGAVVPTS.

It belongs to the succinate/malate CoA ligase alpha subunit family. Heterooctamer of 4 alpha and 4 beta chains.

The protein localises to the cytoplasm. It is found in the cytosol. The catalysed reaction is oxaloacetate + acetyl-CoA + ADP + phosphate = citrate + ATP + CoA. Its function is as follows. ATP citrate-lyase is the primary enzyme responsible for the synthesis of cytosolic acetyl-CoA, used for the elongation of fatty acids and biosynthesis of isoprenoids, flavonoids and malonated derivatives. May supply substrate to the cytosolic acetyl-CoA carboxylase, which generates the malonyl-CoA used for the synthesis of a multitude of compounds, including very long chain fatty acids and flavonoids. In contrast to all known animal ACL enzymes having a homomeric structure, plant ACLs are composed of alpha and beta chains. The polypeptide is ATP-citrate synthase beta chain protein 1 (ACLB-1) (Oryza sativa subsp. japonica (Rice)).